The primary structure comprises 344 residues: tRNA N6-adenosine threonylcarbamoyltransferase (344 aa).

2 residues coordinate Fe cation: histidine 112 and histidine 116. Substrate contacts are provided by residues 135-139 (LVSGG), aspartate 168, glycine 181, and asparagine 271. Aspartate 299 serves as a coordination point for Fe cation. Positions 323–344 (RARPRWPLDPEAEPVRGAGVKA) are disordered.

Belongs to the KAE1 / TsaD family. It depends on Fe(2+) as a cofactor.

The protein resides in the cytoplasm. The enzyme catalyses L-threonylcarbamoyladenylate + adenosine(37) in tRNA = N(6)-L-threonylcarbamoyladenosine(37) in tRNA + AMP + H(+). Its function is as follows. Required for the formation of a threonylcarbamoyl group on adenosine at position 37 (t(6)A37) in tRNAs that read codons beginning with adenine. Is involved in the transfer of the threonylcarbamoyl moiety of threonylcarbamoyl-AMP (TC-AMP) to the N6 group of A37, together with TsaE and TsaB. TsaD likely plays a direct catalytic role in this reaction. In Erythrobacter litoralis (strain HTCC2594), this protein is tRNA N6-adenosine threonylcarbamoyltransferase.